Here is a 149-residue protein sequence, read N- to C-terminus: Lipoprotein signal peptidase (149 aa).

2 consecutive transmembrane segments (helical) span residues 53-73 (MPGK…ALVI) and 89-109 (GLIA…GFVI). Catalysis depends on residues aspartate 110 and aspartate 124. The chain crosses the membrane as a helical span at residues 119–139 (VFNLADSAIVCGGILLLILVL).

This sequence belongs to the peptidase A8 family.

The protein resides in the cell membrane. It carries out the reaction Release of signal peptides from bacterial membrane prolipoproteins. Hydrolyzes -Xaa-Yaa-Zaa-|-(S,diacylglyceryl)Cys-, in which Xaa is hydrophobic (preferably Leu), and Yaa (Ala or Ser) and Zaa (Gly or Ala) have small, neutral side chains.. It functions in the pathway protein modification; lipoprotein biosynthesis (signal peptide cleavage). Its function is as follows. This protein specifically catalyzes the removal of signal peptides from prolipoproteins. The sequence is that of Lipoprotein signal peptidase from Syntrophomonas wolfei subsp. wolfei (strain DSM 2245B / Goettingen).